The sequence spans 482 residues: Cysteine--tRNA ligase (482 aa).

Cys-28 contacts Zn(2+). The 'HIGH' region signature appears at 30 to 40 (PTVYNFLHVGN). Cys-208, His-233, and Glu-237 together coordinate Zn(2+). A 'KMSKS' region motif is present at residues 265 to 269 (KMSKS). Lys-268 is an ATP binding site.

This sequence belongs to the class-I aminoacyl-tRNA synthetase family. As to quaternary structure, monomer. The cofactor is Zn(2+).

It localises to the cytoplasm. It carries out the reaction tRNA(Cys) + L-cysteine + ATP = L-cysteinyl-tRNA(Cys) + AMP + diphosphate. The sequence is that of Cysteine--tRNA ligase from Bdellovibrio bacteriovorus (strain ATCC 15356 / DSM 50701 / NCIMB 9529 / HD100).